The primary structure comprises 202 residues: Imidazole glycerol phosphate synthase subunit HisH (202 aa).

A Glutamine amidotransferase type-1 domain is found at 3–202 (RIVIIDYGLG…KILRNFVEMC (200 aa)). Residue Cys-79 is the Nucleophile of the active site. Active-site residues include His-183 and Glu-185.

Heterodimer of HisH and HisF.

It localises to the cytoplasm. The catalysed reaction is 5-[(5-phospho-1-deoxy-D-ribulos-1-ylimino)methylamino]-1-(5-phospho-beta-D-ribosyl)imidazole-4-carboxamide + L-glutamine = D-erythro-1-(imidazol-4-yl)glycerol 3-phosphate + 5-amino-1-(5-phospho-beta-D-ribosyl)imidazole-4-carboxamide + L-glutamate + H(+). It catalyses the reaction L-glutamine + H2O = L-glutamate + NH4(+). It functions in the pathway amino-acid biosynthesis; L-histidine biosynthesis; L-histidine from 5-phospho-alpha-D-ribose 1-diphosphate: step 5/9. Its function is as follows. IGPS catalyzes the conversion of PRFAR and glutamine to IGP, AICAR and glutamate. The HisH subunit catalyzes the hydrolysis of glutamine to glutamate and ammonia as part of the synthesis of IGP and AICAR. The resulting ammonia molecule is channeled to the active site of HisF. This is Imidazole glycerol phosphate synthase subunit HisH from Methanosarcina mazei (strain ATCC BAA-159 / DSM 3647 / Goe1 / Go1 / JCM 11833 / OCM 88) (Methanosarcina frisia).